A 541-amino-acid polypeptide reads, in one-letter code: MNTFTSNSSDLTTTATETSSFSTLYLLSTLQAFVAITLVMLLKKLMTDPNKKKPYLPPGPTGWPIIGMIPTMLKSRPVFRWLHSIMKQLNTEIACVKLGNTHVITVTCPKIAREILKQQDALFASRPLTYAQKILSNGYKTCVITPFGDQFKKMRKVVMTELVCPARHRWLHQKRSEENDHLTAWVYNMVKNSGSVDFRFMTRHYCGNAIKKLMFGTRTFSKNTAPDGGPTVEDVEHMEAMFEALGFTFAFCISDYLPMLTGLDLNGHEKIMRESSAIMDKYHDPIIDERIKMWREGKRTQIEDFLDIFISIKDEQGNPLLTADEIKPTIKELVMAAPDNPSNAVEWAMAEMVNKPEILRKAMEEIDRVVGKERLVQESDIPKLNYVKAILREAFRLHPVAAFNLPHVALSDTTVAGYHIPKGSQVLLSRYGLGRNPKVWADPLCFKPERHLNECSEVTLTENDLRFISFSTGKRGCAAPALGTALTTMMLARLLQGFTWKLPENETRVELMESSHDMFLAKPLVMVGDLRLPEHLYPTVK.

The helical transmembrane segment at 21-41 (FSTLYLLSTLQAFVAITLVML) threads the bilayer. C477 is a binding site for heme.

It belongs to the cytochrome P450 family. Heme serves as cofactor. As to expression, found in all tissues tested. Highest expression in roots, and low expression in stem.

It localises to the membrane. It catalyses the reaction L-tryptophan + 2 reduced [NADPH--hemoprotein reductase] + 2 O2 = (E)-(indol-3-yl)acetaldehyde oxime + 2 oxidized [NADPH--hemoprotein reductase] + CO2 + 3 H2O + 2 H(+). Its function is as follows. Converts tryptophan to indole-3-acetaldoxime, a precursor for tryptophan-derived glucosinolates and indole-3-acetic acid (IAA). Involved in the biosynthetic pathway to 4-hydroxyindole-3-carbonyl nitrile (4-OH-ICN), a cyanogenic metabolite required for inducible pathogen defense. The sequence is that of Tryptophan N-monooxygenase 1 (CYP79B2) from Arabidopsis thaliana (Mouse-ear cress).